Here is a 166-residue protein sequence, read N- to C-terminus: Transcriptional repressor NrdR (166 aa).

The segment at 3–34 is a zinc-finger region; the sequence is CPFCGFSDSRVLDSRPTVEGNSIRRRRECCGC. One can recognise an ATP-cone domain in the interval 49 to 139; it reads LIVVKKDGRR…VYREFRDAES (91 aa).

This sequence belongs to the NrdR family. Requires Zn(2+) as cofactor.

Negatively regulates transcription of bacterial ribonucleotide reductase nrd genes and operons by binding to NrdR-boxes. This Pelotomaculum thermopropionicum (strain DSM 13744 / JCM 10971 / SI) protein is Transcriptional repressor NrdR.